The chain runs to 311 residues: Methionyl-tRNA formyltransferase (311 aa).

Residue 110–113 participates in (6S)-5,6,7,8-tetrahydrofolate binding; sequence SLLP.

The protein belongs to the Fmt family.

The catalysed reaction is L-methionyl-tRNA(fMet) + (6R)-10-formyltetrahydrofolate = N-formyl-L-methionyl-tRNA(fMet) + (6S)-5,6,7,8-tetrahydrofolate + H(+). Functionally, attaches a formyl group to the free amino group of methionyl-tRNA(fMet). The formyl group appears to play a dual role in the initiator identity of N-formylmethionyl-tRNA by promoting its recognition by IF2 and preventing the misappropriation of this tRNA by the elongation apparatus. This Streptococcus pyogenes serotype M6 (strain ATCC BAA-946 / MGAS10394) protein is Methionyl-tRNA formyltransferase.